The sequence spans 85 residues: Large ribosomal subunit protein bL27 (85 aa).

Belongs to the bacterial ribosomal protein bL27 family.

This is Large ribosomal subunit protein bL27 from Pseudomonas fluorescens (strain SBW25).